Reading from the N-terminus, the 160-residue chain is Transcription elongation factor GreA (160 aa).

Residues 10–37 (TLEGKAKLENELQELKTVKRKEVVERIK) adopt a coiled-coil conformation.

Belongs to the GreA/GreB family.

In terms of biological role, necessary for efficient RNA polymerase transcription elongation past template-encoded arresting sites. The arresting sites in DNA have the property of trapping a certain fraction of elongating RNA polymerases that pass through, resulting in locked ternary complexes. Cleavage of the nascent transcript by cleavage factors such as GreA or GreB allows the resumption of elongation from the new 3'terminus. GreA releases sequences of 2 to 3 nucleotides. This is Transcription elongation factor GreA from Listeria welshimeri serovar 6b (strain ATCC 35897 / DSM 20650 / CCUG 15529 / CIP 8149 / NCTC 11857 / SLCC 5334 / V8).